We begin with the raw amino-acid sequence, 216 residues long: MPIQVVSADFAKTATRPEEWPRGATPEIAFVGRSNVGKSSMLNALARRKGLARVSSTPGRTRALQFFDLSYRPTPAARPRAIRFCDLPGYGYAKVARAERDRWTAMIEDYLRDRDVLRAVVLIVDARHPPSESDEDAAAFLVSAGRRLVVAATKTDKLPKARRVLALQQVERALGLARGDAVPFSAVEGTGTDALWARLAALAAEEPQTAEAEPPA.

The 182-residue stretch at 24 to 205 folds into the EngB-type G domain; sequence ATPEIAFVGR…WARLAALAAE (182 aa). Residues 32-39, 59-63, 86-89, 153-156, and 184-186 each bind GTP; these read GRSNVGKS, GRTRA, DLPG, TKTD, and FSA. Ser-39 and Thr-61 together coordinate Mg(2+).

This sequence belongs to the TRAFAC class TrmE-Era-EngA-EngB-Septin-like GTPase superfamily. EngB GTPase family. It depends on Mg(2+) as a cofactor.

In terms of biological role, necessary for normal cell division and for the maintenance of normal septation. This chain is Probable GTP-binding protein EngB, found in Anaeromyxobacter dehalogenans (strain 2CP-1 / ATCC BAA-258).